Here is a 224-residue protein sequence, read N- to C-terminus: Ribose-5-phosphate isomerase A (224 aa).

Residues 32 to 35 (TGST), 85 to 88 (DGAD), and 98 to 101 (KGGG) each bind substrate. Residue E107 is the Proton acceptor of the active site. K125 serves as a coordination point for substrate.

Belongs to the ribose 5-phosphate isomerase family. As to quaternary structure, homodimer.

It catalyses the reaction aldehydo-D-ribose 5-phosphate = D-ribulose 5-phosphate. It functions in the pathway carbohydrate degradation; pentose phosphate pathway; D-ribose 5-phosphate from D-ribulose 5-phosphate (non-oxidative stage): step 1/1. Catalyzes the reversible conversion of ribose-5-phosphate to ribulose 5-phosphate. In Pseudomonas putida (strain ATCC 700007 / DSM 6899 / JCM 31910 / BCRC 17059 / LMG 24140 / F1), this protein is Ribose-5-phosphate isomerase A.